The chain runs to 241 residues: Endo-chitosanase B (241 aa).

The signal sequence occupies residues 1-17 (MRLSEILAVALVTGATA). Asn-86 carries N-linked (GlcNAc...) asparagine glycosylation.

The protein belongs to the glycosyl hydrolase 75 family.

It localises to the secreted. The enzyme catalyses Endohydrolysis of beta-(1-&gt;4)-linkages between D-glucosamine residues in a partly acetylated chitosan.. Chitosanase catalyzing the endo-type cleavage of chitosan, the deacylated form of chitin. Chitosanase may be crucial in the degradation of the deacetylated portion of chitin in the fungal cell wall. Chitoolisaccharides produced by the hydrolysis of partially N-acetylated chitosan are known to have many biological activities, including antibacterial activity, immune-enhancing effects, and elicitor activity. This Aspergillus oryzae (strain ATCC 42149 / RIB 40) (Yellow koji mold) protein is Endo-chitosanase B (csnB).